We begin with the raw amino-acid sequence, 321 residues long: Phosphatidylglycerol phospholipase C (321 aa).

The 250-residue stretch at 2 to 251 (VEIVGHRAFK…DDPIKARKLC (250 aa)) folds into the GP-PDE domain. The chain crosses the membrane as a helical; Anchor for type IV membrane protein span at residues 297–315 (WVHIKLCGWSIAYVIFLFL).

Belongs to the glycerophosphoryl diester phosphodiesterase family.

It is found in the mitochondrion membrane. Its subcellular location is the lipid droplet. It catalyses the reaction a 1,2-diacyl-sn-glycero-3-phospho-(1'-sn-glycerol) + H2O = sn-glycerol 3-phosphate + a 1,2-diacyl-sn-glycerol + H(+). Its function is as follows. Phosphatidylglycerol phospholipase required for the removal of excess phosphatidylglycerol (PG) via a phospholipase C-type degradation mechanism. The protein is Phosphatidylglycerol phospholipase C (PGC1) of Saccharomyces cerevisiae (strain ATCC 204508 / S288c) (Baker's yeast).